Here is a 215-residue protein sequence, read N- to C-terminus: Large ribosomal subunit protein uL3 (215 aa).

Q151 carries the N5-methylglutamine modification.

The protein belongs to the universal ribosomal protein uL3 family. As to quaternary structure, part of the 50S ribosomal subunit. Forms a cluster with proteins L14 and L19. Methylated by PrmB.

Functionally, one of the primary rRNA binding proteins, it binds directly near the 3'-end of the 23S rRNA, where it nucleates assembly of the 50S subunit. The chain is Large ribosomal subunit protein uL3 from Rickettsia massiliae (strain Mtu5).